Here is a 719-residue protein sequence, read N- to C-terminus: ATP-dependent RNA helicase SUV3 homolog, mitochondrial (719 aa).

The transit peptide at 1–18 directs the protein to the mitochondrion; that stretch reads MRRASGVLRVLGGLTQRC. The segment at 16–42 is disordered; it reads QRCSTSSTPSSSRFPAMNSRRKRNSVR. Positions 181–319 constitute a Helicase ATP-binding domain; sequence EARSVTRKIF…PAAIDIVKKL (139 aa). 194–201 contacts ATP; sequence GPTNSGKT. In terms of domain architecture, Helicase C-terminal spans 343–499; sequence KAIESYSNIE…PTYDQIETFS (157 aa). The tract at residues 662–692 is disordered; it reads SKAAGSSKSSEGKRENPSKSEREKPNKRSSI. Positions 671–687 are enriched in basic and acidic residues; sequence SEGKRENPSKSEREKPN. The stretch at 693–717 forms a coiled coil; the sequence is LEALLKRADISEDDLEQLREELNKN.

This sequence belongs to the helicase family. It depends on Mg(2+) as a cofactor. Mn(2+) serves as cofactor.

The protein localises to the mitochondrion matrix. It is found in the nucleus. It catalyses the reaction ATP + H2O = ADP + phosphate + H(+). In terms of biological role, ATPase and DNA/RNA helicase able to unwind DNA/DNA, DNA/RNA and RNA/RNA duplexes in the 5'-3' direction. The sequence is that of ATP-dependent RNA helicase SUV3 homolog, mitochondrial from Caenorhabditis elegans.